The sequence spans 2208 residues: Glutamate synthase 1 [NADH], chloroplastic (2208 aa).

A chloroplast-targeting transit peptide spans 1-49; it reads MSAASSSSVLHLRTNQQLLSLRSLKNSTSVASQLAVTSGVSRRRSCTAR. Cysteine 117 acts as the Nucleophile in catalysis. The Glutamine amidotransferase type-2 domain occupies 117–521; the sequence is CGVGFVAELS…PGMMLLVDFE (405 aa). Residues 1040-1067 form a disordered region; that stretch reads GKSNTGEGGELPSRMEPLADGSRNPKRS. Position 1211–1268 (1211–1268) interacts with FMN; the sequence is LAETHQTLVANDLRGRTVLQTDGQLKTGRDVAVAALLGAEEFGFSTAPLITLGCIMMR. Residues cysteine 1264, cysteine 1270, and cysteine 1275 each contribute to the [3Fe-4S] cluster site. 1995–2009 is an NAD(+) binding site; that stretch reads GGGDTGTDCIGTSIR.

Belongs to the glutamate synthase family. As to quaternary structure, monomer. [3Fe-4S] cluster serves as cofactor. Requires FAD as cofactor. The cofactor is FMN. In terms of tissue distribution, highly expressed in roots and at low levels in leaves.

It is found in the plastid. Its subcellular location is the chloroplast. The enzyme catalyses 2 L-glutamate + NAD(+) = L-glutamine + 2-oxoglutarate + NADH + H(+). It functions in the pathway amino-acid biosynthesis; L-glutamate biosynthesis via GLT pathway; L-glutamate from 2-oxoglutarate and L-glutamine (NAD(+) route): step 1/1. It participates in energy metabolism; nitrogen metabolism. Functionally, involved in glutamate biosynthesis. Required for non-photorespiratory ammonium assimilation. Probably involved in primary ammonium assimilation in roots. This chain is Glutamate synthase 1 [NADH], chloroplastic (GLT1), found in Arabidopsis thaliana (Mouse-ear cress).